We begin with the raw amino-acid sequence, 753 residues long: 5-methyltetrahydropteroyltriglutamate--homocysteine methyltransferase (753 aa).

Residues 17-20 (RELK) and Lys-117 contribute to the 5-methyltetrahydropteroyltri-L-glutamate site. Residues 431–433 (IGS) and Glu-484 contribute to the L-homocysteine site. L-methionine is bound by residues 431-433 (IGS) and Glu-484. Residues 515 to 516 (RC) and Trp-561 contribute to the 5-methyltetrahydropteroyltri-L-glutamate site. Residue Asp-599 coordinates L-homocysteine. Residue Asp-599 coordinates L-methionine. Residue Glu-605 coordinates 5-methyltetrahydropteroyltri-L-glutamate. Positions 641, 643, and 665 each coordinate Zn(2+). His-694 functions as the Proton donor in the catalytic mechanism. Cys-726 provides a ligand contact to Zn(2+).

The protein belongs to the vitamin-B12 independent methionine synthase family. It depends on Zn(2+) as a cofactor.

It carries out the reaction 5-methyltetrahydropteroyltri-L-glutamate + L-homocysteine = tetrahydropteroyltri-L-glutamate + L-methionine. Its pathway is amino-acid biosynthesis; L-methionine biosynthesis via de novo pathway; L-methionine from L-homocysteine (MetE route): step 1/1. In terms of biological role, catalyzes the transfer of a methyl group from 5-methyltetrahydrofolate to homocysteine resulting in methionine formation. This Shigella boydii serotype 4 (strain Sb227) protein is 5-methyltetrahydropteroyltriglutamate--homocysteine methyltransferase.